The sequence spans 504 residues: Apolipoprotein N-acyltransferase (504 aa).

Transmembrane regions (helical) follow at residues 6-26 (LALT…YALV), 47-67 (ALYG…WVFV), 83-103 (LTAL…WLGV), 105-125 (AGGG…WVVT), 153-173 (IAPV…AGLL), and 186-206 (FALL…KVQW). The region spanning 219-457 (LQGNVPQDQK…REALTGMMQP (239 aa)) is the CN hydrolase domain. Glu-258 functions as the Proton acceptor in the catalytic mechanism. Lys-317 is an active-site residue. Cys-369 serves as the catalytic Nucleophile. The chain crosses the membrane as a helical span at residues 465–485 (ALWGDWPAIGLCAGIVGICFA).

It belongs to the CN hydrolase family. Apolipoprotein N-acyltransferase subfamily.

It localises to the cell inner membrane. It catalyses the reaction N-terminal S-1,2-diacyl-sn-glyceryl-L-cysteinyl-[lipoprotein] + a glycerophospholipid = N-acyl-S-1,2-diacyl-sn-glyceryl-L-cysteinyl-[lipoprotein] + a 2-acyl-sn-glycero-3-phospholipid + H(+). It participates in protein modification; lipoprotein biosynthesis (N-acyl transfer). Its function is as follows. Catalyzes the phospholipid dependent N-acylation of the N-terminal cysteine of apolipoprotein, the last step in lipoprotein maturation. In Methylococcus capsulatus (strain ATCC 33009 / NCIMB 11132 / Bath), this protein is Apolipoprotein N-acyltransferase.